The chain runs to 135 residues: Small ribosomal subunit protein uS11 (135 aa).

The interval 1–22 (MPPKSRTAAGAKKVRRKEKKNV) is disordered.

It belongs to the universal ribosomal protein uS11 family. Part of the 30S ribosomal subunit. Interacts with proteins S7 and S18. Binds to IF-3.

Located on the platform of the 30S subunit, it bridges several disparate RNA helices of the 16S rRNA. Forms part of the Shine-Dalgarno cleft in the 70S ribosome. The chain is Small ribosomal subunit protein uS11 from Nocardioides sp. (strain ATCC BAA-499 / JS614).